A 155-amino-acid chain; its full sequence is Ribosomal RNA large subunit methyltransferase H (155 aa).

S-adenosyl-L-methionine-binding positions include Leu-72, Gly-103, and 122-127 (LSDLTL).

The protein belongs to the RNA methyltransferase RlmH family. As to quaternary structure, homodimer.

The protein resides in the cytoplasm. The catalysed reaction is pseudouridine(1915) in 23S rRNA + S-adenosyl-L-methionine = N(3)-methylpseudouridine(1915) in 23S rRNA + S-adenosyl-L-homocysteine + H(+). Specifically methylates the pseudouridine at position 1915 (m3Psi1915) in 23S rRNA. The sequence is that of Ribosomal RNA large subunit methyltransferase H from Paracidovorax citrulli (strain AAC00-1) (Acidovorax citrulli).